The following is a 77-amino-acid chain: MFVKTGDKVKVIAGKDKGKEGTVLSINVKKNRVVVKGVNKIKKHQKPSQTNANGGVVESEGSIHASNVKVISKKEDK.

The segment at 42-61 is disordered; it reads KKHQKPSQTNANGGVVESEG.

The protein belongs to the universal ribosomal protein uL24 family. In terms of assembly, part of the 50S ribosomal subunit.

In terms of biological role, one of two assembly initiator proteins, it binds directly to the 5'-end of the 23S rRNA, where it nucleates assembly of the 50S subunit. Its function is as follows. One of the proteins that surrounds the polypeptide exit tunnel on the outside of the subunit. The polypeptide is Large ribosomal subunit protein uL24 (Lactobacillus helveticus (strain DPC 4571)).